The following is a 104-amino-acid chain: Succinate dehydrogenase assembly factor 4, mitochondrial (104 aa).

The transit peptide at 1 to 30 (MVSTTLSVSRMTFVWRAARPSLLNHSLRKM) directs the protein to the mitochondrion. The segment at 29–104 (KMSYQEGKPE…WERKGRCIDF (76 aa)) is disordered. 2 stretches are compositionally biased toward basic and acidic residues: residues 63–83 (EREP…EKGG) and 91–104 (RYGD…CIDF).

This sequence belongs to the SDHAF4 family. In terms of assembly, interacts with Sdha in its FAD-bound form.

Its subcellular location is the mitochondrion matrix. Functionally, plays an essential role in the assembly of succinate dehydrogenase (SDH), an enzyme complex (also referred to as respiratory complex II) that is a component of both the tricarboxylic acid (TCA) cycle and the mitochondrial electron transport chain, and which couples the oxidation of succinate to fumarate with the reduction of ubiquinone (coenzyme Q) to ubiquinol. Binds to the flavoprotein subunit Sdha in its FAD-bound form, blocking the generation of excess reactive oxygen species (ROS) and facilitating its assembly with the iron-sulfur protein subunit Sdhb into the SDH catalytic dimer. This is Succinate dehydrogenase assembly factor 4, mitochondrial from Mus musculus (Mouse).